The primary structure comprises 87 residues: Large ribosomal subunit protein bL27 (87 aa).

The tract at residues 1–21 is disordered; it reads MAHKKAGGSSRNGRDSESKRL.

The protein belongs to the bacterial ribosomal protein bL27 family.

The chain is Large ribosomal subunit protein bL27 from Burkholderia ambifaria (strain MC40-6).